Reading from the N-terminus, the 382-residue chain is Alkanesulfonate monooxygenase (382 aa).

Belongs to the SsuD family.

It catalyses the reaction an alkanesulfonate + FMNH2 + O2 = an aldehyde + FMN + sulfite + H2O + 2 H(+). Functionally, catalyzes the desulfonation of aliphatic sulfonates. The polypeptide is Alkanesulfonate monooxygenase (Pseudomonas putida (strain W619)).